The following is a 134-amino-acid chain: Seminal plasma protein PDC-109 (134 aa).

Positions 1 to 25 (MALQLGLFLIWAGVSVFLQLDPVNG) are cleaved as a signal peptide. Thr36 is a glycosylation site (O-linked (GalNAc...) threonine). 2 Fibronectin type-II domains span residues 44-88 (PEDE…YCAQ) and 89-134 (RDYA…WKYC). 4 cysteine pairs are disulfide-bonded: Cys49–Cys73, Cys63–Cys86, Cys94–Cys119, and Cys108–Cys134.

It belongs to the seminal plasma protein family. In terms of assembly, homodimer. In terms of processing, O-linked glycan consists of Gal-GalNAc disaccharide which is modified with a sialic acid residue (macro- and/or microheterogeneity account for differences between BSP-A1 and BSP-A2). In terms of tissue distribution, major component of seminal plasma.

It is found in the secreted. Functionally, could enhance the fertilizing capacity of bull spermatozoa upon interaction with heparin-like glycosaminoglycans present in the female genital tract. Exhibits both simulatory and inhibitory actions on the release of pituitary gonadotropins. The sequence is that of Seminal plasma protein PDC-109 from Bos taurus (Bovine).